A 670-amino-acid polypeptide reads, in one-letter code: MSLELKEKESELPFDEQIINDKWRSKYTPIDAYFKFHRQTVENLESFWESVAKELEWFKPWDKVLDASNPPFYKWFVGGRLNLSYLAVDRHVKTWRKNKLAIEWEGEPVDENGYPTDRRKLTYYDLYREVNRVAYMLKQNFGVKKGDKITLYLPMVPELPITMLAAWRIGAITSVVFSGFSADALAERINDSQSRIVITADGFWRRGRVVRLKEVVDAALEKATGVESVIVLPRLGLKDVPMTEGRDYWWNKLMQGIPPNAYIEPEPVESEHPSFILYTSGTTGKPKGIVHDTGGWAVHVYATMKWVFDIRDDDIFWCTADIGWVTGHSYVVLGPLLMGATEVIYEGAPDYPQPDRWWSIIERYGVTIFYTSPTAIRMFMRYGEEWPRKHDLSTLRIIHSVGEPINPEAWRWAYRVLGNEKVAFGSTWWMTETGGIVISHAPGLYLVPMKPGTNGPPLPGFEVDVVDENGNPAPPGVKGYLVIKKPWPGMLHGIWGDPERYIKTYWSRFPGMFYAGDYAIKDKDGYIWVLGRADEVIKVAGHRLGTYELESALISHPAVAESAVVGVPDAIKGEVPIAFVVLKQGVAPSDELRKELREHVRRTIGPIAEPAQIFFVTKLPKTRSGKIMRRLLKAVATGAPLGDVTTLEDETSVEEAKRAYEEIKAEMART.

Residues 205-208 and T326 each bind CoA; that span reads RRGR. ATP is bound by residues 402 to 404, 426 to 431, D517, R532, and R543; these read GEP and STWWMT. The Mg(2+) site is built by H556 and V559. A CoA-binding site is contributed by R601. Residue K626 is modified to N6-acetyllysine.

It belongs to the ATP-dependent AMP-binding enzyme family. Mg(2+) serves as cofactor. Post-translationally, acetylated. Deacetylation by the SIR2-homolog deacetylase activates the enzyme.

It carries out the reaction acetate + ATP + CoA = acetyl-CoA + AMP + diphosphate. Catalyzes the conversion of acetate into acetyl-CoA (AcCoA), an essential intermediate at the junction of anabolic and catabolic pathways. AcsA undergoes a two-step reaction. In the first half reaction, AcsA combines acetate with ATP to form acetyl-adenylate (AcAMP) intermediate. In the second half reaction, it can then transfer the acetyl group from AcAMP to the sulfhydryl group of CoA, forming the product AcCoA. This is Acetyl-coenzyme A synthetase from Pyrobaculum aerophilum (strain ATCC 51768 / DSM 7523 / JCM 9630 / CIP 104966 / NBRC 100827 / IM2).